A 1770-amino-acid polypeptide reads, in one-letter code: Probable outer membrane protein PmpC (1770 aa).

The first 20 residues, 1–20, serve as a signal peptide directing secretion; that stretch reads MKFMSATAVFAAALSSVTEA. 5 disordered regions span residues 73–109, 264–311, 481–505, 611–818, and 1271–1329; these read LPRK…ELDN, EDTL…GKGG, PAAP…TNSD, ESTP…STTE, and LRII…TSRT. Positions 85–97 are enriched in low complexity; it reads SPTTEGVSSSSSG. Positions 268–285 are enriched in polar residues; that stretch reads DSTPETEQTESNGNQDGS. Composition is skewed to low complexity over residues 294–303 and 496–505; these read SESPESTPSP and QTETSDTNSD. 2 stretches are compositionally biased toward polar residues: residues 631–675 and 682–703; these read TEDP…TGNA and QDST…QSNE. Composition is skewed to low complexity over residues 719–748 and 762–802; these read ESVS…GDQS and STDS…GDSA. Residues 1303-1319 are compositionally biased toward polar residues; it reads NNDASNQGESANGSSSP. An Autotransporter domain is found at 1477–1770; it reads EEVSYNNLWI…MMNCGARMTF (294 aa).

Belongs to the PMP outer membrane protein family.

The protein resides in the secreted. The protein localises to the cell wall. It localises to the cell outer membrane. The sequence is that of Probable outer membrane protein PmpC (pmpC) from Chlamydia trachomatis serovar D (strain ATCC VR-885 / DSM 19411 / UW-3/Cx).